A 1050-amino-acid polypeptide reads, in one-letter code: Self-sufficient cytochrome P450 monooxygenase CYP505E3 (1050 aa).

Cysteine 406 serves as a coordination point for heme. Over residues 459–481 (RGQSATGLSQGSMSASGATSSVA) the composition is skewed to polar residues. Positions 459-495 (RGQSATGLSQGSMSASGATSSVASPGPPAATGAQSNP) are disordered. A Flavodoxin-like domain is found at 501–641 (ISFFYGSNSG…DLELWEETNL (141 aa)). FMN contacts are provided by residues 507 to 511 (SNSGT) and 585 to 617 (VFGC…TRLT). Positions 679–907 (RGLVEAKVTA…RPAKDAFHLP (229 aa)) constitute an FAD-binding FR-type domain.

In the N-terminal section; belongs to the cytochrome P450 family. The cofactor is FAD. FMN serves as cofactor. Heme is required as a cofactor.

It carries out the reaction 2 oxidized [cytochrome P450] + NADPH = 2 reduced [cytochrome P450] + NADP(+) + H(+). It catalyses the reaction an organic molecule + reduced [NADPH--hemoprotein reductase] + O2 = an alcohol + oxidized [NADPH--hemoprotein reductase] + H2O + H(+). The catalysed reaction is decane + reduced [NADPH--hemoprotein reductase] + O2 = 3-decanol + oxidized [NADPH--hemoprotein reductase] + H2O + H(+). The enzyme catalyses dodecane + reduced [NADPH--hemoprotein reductase] + O2 = 5-dodecanol + oxidized [NADPH--hemoprotein reductase] + H2O + H(+). It carries out the reaction tetradecane + reduced [NADPH--hemoprotein reductase] + O2 = 7-tetradecanol + oxidized [NADPH--hemoprotein reductase] + H2O + H(+). It catalyses the reaction hexadecane + reduced [NADPH--hemoprotein reductase] + O2 = 9-hexadecanol + oxidized [NADPH--hemoprotein reductase] + H2O + H(+). The catalysed reaction is dodecanoate + reduced [NADPH--hemoprotein reductase] + O2 = 5-hydroxydodecanoate + oxidized [NADPH--hemoprotein reductase] + H2O + H(+). The enzyme catalyses tetradecanoate + reduced [NADPH--hemoprotein reductase] + O2 = 7-hydroxytetradecanoate + oxidized [NADPH--hemoprotein reductase] + H2O + H(+). It carries out the reaction hexadecanoate + reduced [NADPH--hemoprotein reductase] + O2 = 9-hydroxyhexadecanoate + oxidized [NADPH--hemoprotein reductase] + H2O + H(+). It catalyses the reaction decan-1-ol + reduced [NADPH--hemoprotein reductase] + O2 = 1,3-decanediol + oxidized [NADPH--hemoprotein reductase] + H2O + H(+). The catalysed reaction is decan-1-ol + reduced [NADPH--hemoprotein reductase] + O2 = 1,7-decanediol + oxidized [NADPH--hemoprotein reductase] + H2O + H(+). The enzyme catalyses dodecan-1-ol + reduced [NADPH--hemoprotein reductase] + O2 = 1,5-dodecanediol + oxidized [NADPH--hemoprotein reductase] + H2O + H(+). It carries out the reaction dodecan-1-ol + reduced [NADPH--hemoprotein reductase] + O2 = 1,4-dodecanediol + oxidized [NADPH--hemoprotein reductase] + H2O + H(+). It catalyses the reaction dodecan-1-ol + reduced [NADPH--hemoprotein reductase] + O2 = 1,6-dodecanediol + oxidized [NADPH--hemoprotein reductase] + H2O + H(+). In terms of biological role, self-sufficient cytochrome P450 monooxygenase that catalyzes the regioselective in-chain hydroxylation of alkanes, fatty alcohols, and fatty acids at the omega-7 position. Performs hydroxylation of C10-C16 n-alkanes and C12 and C14 fatty alcohols; and thereby enables the one step biocatalytic synthesis of rare alcohols such as 5-dodecanol and 7-tetradecanol. Converts 1-dodecanol into 1,5-dodecanediol as major product with very little sub-terminally hydroxylated products with the 1,4-dodecanediol and 1,6-dodecanediol more abundant. Does not use hexadecanediol nor decanoic acid as substrates. Converts dodecanoic acid to 5-hydroxydodecanoic acid which can be further converted into delta-dodecalactone by lactonization of the 5-hydroxy acid at low pH. Also gives sub-terminal hydroxylation of dodecanoic acid with 9-hydroxydodecanoic acid being the second most abundant product. The C14 and C16 fatty acids are double hydroxylated to yield dihydroxy acids hydroxylated at both the omega-7 position and a sub-terminal position (omega-1, omega-2, or omega-3). The chain is Self-sufficient cytochrome P450 monooxygenase CYP505E3 from Aspergillus terreus (strain NIH 2624 / FGSC A1156).